The sequence spans 902 residues: Cytosolic 10-formyltetrahydrofolate dehydrogenase (902 aa).

The tract at residues 1-310 is hydrolase domain; that stretch reads MKIAVIGQSL…PASQYYKTAD (310 aa). Residue 88–90 participates in (6R)-10-formyltetrahydrofolate binding; sequence QFI. The Proton donor role is filled by His106. A (6R)-10-formyltetrahydrofolate-binding site is contributed by Asp142. In terms of domain architecture, Carrier spans 318–395; that stretch reads DEEKKFSEEI…EFIQMVVRRL (78 aa). Ser354 is subject to O-(pantetheine 4'-phosphoryl)serine. An aldehyde dehydrogenase domain region spans residues 417–902; that stretch reads TVKIPHQLFI…LKTKAVTIEY (486 aa). NADP(+)-binding positions include 571-573, 597-600, 630-635, 650-651, and 673-674; these read IPW, KPAQ, GSLIGQ, GS, and EL. Glu673 (proton acceptor) is an active-site residue. The Proton donor role is filled by Cys707. NADP(+) contacts are provided by residues Lys757 and 804–806; that span reads ESF.

In the N-terminal section; belongs to the GART family. It in the C-terminal section; belongs to the aldehyde dehydrogenase family. ALDH1L subfamily. As to quaternary structure, homotetramer. Post-translationally, phosphopantetheinylation at Ser-354 by AASDHPPT is required for the formyltetrahydrofolate dehydrogenase activity.

Its subcellular location is the cytoplasm. It is found in the cytosol. The enzyme catalyses (6R)-10-formyltetrahydrofolate + NADP(+) + H2O = (6S)-5,6,7,8-tetrahydrofolate + CO2 + NADPH + H(+). Its function is as follows. Cytosolic 10-formyltetrahydrofolate dehydrogenase that catalyzes the NADP(+)-dependent conversion of 10-formyltetrahydrofolate to tetrahydrofolate and carbon dioxide. May also have an NADP(+)-dependent aldehyde dehydrogenase activity towards formaldehyde, acetaldehyde, propionaldehyde, and benzaldehyde. Regulates reduced folate pools as well as glycine metabolism. This Xenopus tropicalis (Western clawed frog) protein is Cytosolic 10-formyltetrahydrofolate dehydrogenase (aldh1l1).